A 187-amino-acid chain; its full sequence is Homeobox protein engrailed-like ceh-16 (187 aa).

3 disordered regions span residues 14 to 43 (PYPCPSPTISTPATSPSSISPTFASPNGTP), 60 to 100 (SDRP…DQLD), and 144 to 167 (KSTSSVPRDRCSSVTPNPHNHPSI). Positions 20 to 39 (PTISTPATSPSSISPTFASP) are enriched in low complexity. Positions 87–146 (EKRPRTAFTGDQLDRLKTEFRESRYLTEKRRQELAHELGLNESQIKIWFQNKRAKLKKST) form a DNA-binding region, homeobox. Over residues 145-163 (STSSVPRDRCSSVTPNPHN) the composition is skewed to polar residues.

Belongs to the engrailed homeobox family. In terms of tissue distribution, expressed in seam cells.

The protein resides in the nucleus. It is found in the cytoplasm. Transcriptional regulator which binds to DNA to regulate gene expression and promote seam cell development and differentiation during embryogenesis. Plays a role in maintaining the boundaries between the lateral rows of seam cells and the ventral and dorsal row of epidermal cells during embryonic development. Negatively regulates the expression of the fusion effector protein eff-1 to prevent seam cell fusion with the dorsal and ventral epidermal cells during embryonic elongation. Positively regulates seam cell self-renewal and expansion during the L2 larval stage to promote seam cell development. This role does not seem to be via regulation of eff-1 expression. Specifically, it is required for the asymmetric division of the V5.p seam cell during the L2 larval stage, and in turn the asymmetric nuclear distribution of pop-1 in V5.p daughter cells. In Caenorhabditis elegans, this protein is Homeobox protein engrailed-like ceh-16.